Reading from the N-terminus, the 150-residue chain is Single-stranded DNA-binding protein rim1, mitochondrial (150 aa).

The transit peptide at 1–22 directs the protein to the mitochondrion; the sequence is MLFLKSSRAFSKRLFSSSTVRY. Residues 25–125 enclose the SSB domain; it reads IQRLTLTGNL…HVSADVLFYP (101 aa). A disordered region spans residues 127 to 150; sequence NKNGDESGEETHPELDADPMINSF. Positions 128 to 141 are enriched in basic and acidic residues; it reads KNGDESGEETHPEL.

Its subcellular location is the mitochondrion. This protein binds preferentially and cooperatively to ss-DNA. Involved in mitochondrial DNA replication. The protein is Single-stranded DNA-binding protein rim1, mitochondrial (rim1) of Schizosaccharomyces pombe (strain 972 / ATCC 24843) (Fission yeast).